A 398-amino-acid chain; its full sequence is Subtilisin-like protease CPC735_050320 (398 aa).

The N-terminal stretch at 1–19 (MVFLGKILPLALAALSVNG) is a signal peptide. The propeptide occupies 20–117 (AEILSAPGAE…IERDQIMKAS (98 aa)). Residues 35–115 (YIVVMKEGTS…AYIERDQIMK (81 aa)) form the Inhibitor I9 domain. The region spanning 127-398 (SWGLARVSSR…NRLINNGVSQ (272 aa)) is the Peptidase S8 domain. Residues aspartate 159 and histidine 190 each act as charge relay system in the active site. Residues asparagine 220 and asparagine 250 are each glycosylated (N-linked (GlcNAc...) asparagine). The active-site Charge relay system is serine 344.

The protein belongs to the peptidase S8 family.

It localises to the secreted. Functionally, secreted subtilisin-like serine protease with keratinolytic activity that contributes to pathogenicity. This Coccidioides posadasii (strain C735) (Valley fever fungus) protein is Subtilisin-like protease CPC735_050320.